Consider the following 141-residue polypeptide: Lutropin subunit beta (141 aa).

The first 20 residues, 1 to 20 (MEMLQGLLLWLLLSMGGARA), serve as a signal peptide directing secretion. Cystine bridges form between Cys29-Cys77, Cys43-Cys92, Cys46-Cys130, Cys54-Cys108, Cys58-Cys110, and Cys113-Cys120. N-linked (GlcNAc...) asparagine glycosylation is found at Asn33 and Asn50.

This sequence belongs to the glycoprotein hormones subunit beta family. Heterodimer of a common alpha chain and a unique beta chain which confers biological specificity to thyrotropin, lutropin, follitropin and gonadotropin.

The protein localises to the secreted. Promotes spermatogenesis and ovulation by stimulating the testes and ovaries to synthesize steroids. This Macaca fascicularis (Crab-eating macaque) protein is Lutropin subunit beta (LHB).